The chain runs to 145 residues: Galectin-5 (145 aa).

An N-acetylserine modification is found at Ser2. Residues 17 to 145 (FFTSIPNGLY…GDIQLTHVET (129 aa)) enclose the Galectin domain. 77–83 (WGPEERS) lines the a beta-D-galactoside pocket.

As to quaternary structure, monomer. Erythrocytes.

Functionally, may function in erythrocyte differentiation. The polypeptide is Galectin-5 (Lgals5) (Rattus norvegicus (Rat)).